A 120-amino-acid polypeptide reads, in one-letter code: rRNA-processing protein CGR1 (120 aa).

2 disordered regions span residues 1 to 26 and 81 to 120; these read MVNE…KAEK and ERRE…LKER. The stretch at 47 to 106 forms a coiled coil; the sequence is KKQKRLEDKQFKERLKALKDEKEEARQAKITMLKERREKKEENERYERLAAKMHAKKVER. Positions 81–96 are enriched in basic and acidic residues; the sequence is ERREKKEENERYERLA. Positions 97-113 are enriched in basic residues; the sequence is AKMHAKKVERMRRREKR.

It belongs to the CGR1 family.

It localises to the nucleus. Its subcellular location is the nucleolus. Functionally, involved in nucleolar integrity and required for processing of the pre-rRNA for the 60S ribosome subunit. The sequence is that of rRNA-processing protein CGR1 (CGR1) from Saccharomyces cerevisiae (strain ATCC 204508 / S288c) (Baker's yeast).